A 405-amino-acid chain; its full sequence is Envelope glycoprotein M (405 aa).

Topologically, residues 1-17 are intravirion; it reads MKSSKNDTFVYRTWFKT. Residues 18 to 38 traverse the membrane as a helical segment; sequence LVVYFVMFVMSAVVPITAMFP. The Virion surface segment spans residues 39 to 76; that stretch reads NLGYPCYFNALVDYGALNLTNYNLAHHLTPTLYLEPPE. The chain crosses the membrane as a helical span at residues 77–97; that stretch reads MFVYITLVFIADCVAFIYYAC. The Intravirion segment spans residues 98–121; it reads GEVALIKARKKVSGLTDLSAWVSA. The chain crosses the membrane as a helical span at residues 122–142; that stretch reads VGSPTVLFLAILKLWSIQVFI. At 143 to 149 the chain is on the virion surface side; sequence QVLSYKH. The helical transmembrane segment at 150 to 170 threads the bilayer; that stretch reads VFLSAFVYFLHFLASVLHACA. Over 171–192 the chain is Intravirion; sequence CVTRFSPVWVVKAQDNSIPQDT. The chain crosses the membrane as a helical span at residues 193–215; it reads FLWWVVFYLKPIVTNLYLGCLAL. At 216–245 the chain is on the virion surface side; it reads ETLVFSLSVFLALGNSFYFMVGDMVLGAVN. A helical membrane pass occupies residues 246 to 266; it reads LFLVLPIFWYILTEVWLASFL. A topological domain (intravirion) is located at residue Arg267. A helical transmembrane segment spans residues 268–288; it reads HNFGFYCGMFIASIILILPLV. Topologically, residues 289 to 299 are virion surface; that stretch reads RYEAVFVSAKL. The helical transmembrane segment at 300–320 threads the bilayer; it reads HTTVAINVAIIPILCSVAMLI. Residues 321-405 lie on the Intravirion side of the membrane; that stretch reads RICRIFKSMR…TTDSEEEIFP (85 aa). Residues 346 to 405 are disordered; that stretch reads LESEPRPRPSRTPSPGRNRRRSSTSSSSSRSTRRQRPVSTQALISSVLPMTTDSEEEIFP. Over residues 386–397 the composition is skewed to polar residues; the sequence is QALISSVLPMTT.

It belongs to the herpesviridae glycoprotein M family. In terms of assembly, interacts (via N-terminus) with gN (via N-terminus). The gM-gN heterodimer forms the gCII complex.

The protein localises to the virion membrane. Its subcellular location is the host Golgi apparatus. It is found in the host trans-Golgi network. It localises to the host endosome membrane. The protein resides in the host nucleus inner membrane. Functionally, envelope glycoprotein important for virion assembly and egress. Plays a role in the correct incorporation of gH-gL into virion membrane. Directs the glycoprotein N (gN) to the host trans-Golgi network. This is Envelope glycoprotein M from Homo sapiens (Human).